Here is a 222-residue protein sequence, read N- to C-terminus: uncharacterized protein (222 aa).

This is an uncharacterized protein from Pyrococcus woesei.